The sequence spans 508 residues: Fasciclin-3 (508 aa).

Residues 1-20 form the signal peptide; sequence MSRIVFICLAAILTDALTWA. Glutamine 21 is modified (pyrrolidone carboxylic acid). The Extracellular segment spans residues 21–346; it reads QVNVEPNTAL…SSKPPSSSLD (326 aa). Residues 44-106 enclose the Ig-like V-type domain; the sequence is GRSINYCRIE…NGQVKCSLGV (63 aa). Ig-like C2-type domains lie at 126 to 223 and 236 to 310; these read PIIE…ESVP and APVH…GLTL. Residues cysteine 150 and cysteine 211 are joined by a disulfide bond. N-linked (GlcNAc...) asparagine glycosylation is found at asparagine 160, asparagine 257, and asparagine 300. A helical membrane pass occupies residues 347-370; sequence VAAIVGIVVAVAVLVLVVLLIVFA. The Cytoplasmic portion of the chain corresponds to 371-508; the sequence is RATGRWCFGG…QSTSPVWTFK (138 aa). The tract at residues 381-439 is disordered; that stretch reads KSIKTPTNETSDTESADIKATSTATATTTMGGVGVSAEEEETVNEQESPQEQQQQQQKK. Phosphoserine is present on serine 382. 2 stretches are compositionally biased toward low complexity: residues 400-409 and 425-437; these read ATSTATATTT and EQES…QQQQ. Serine 459 is modified (phosphoserine).

As to expression, expressed on different subsets of axon bundles (fascicles) in insect embryos.

The protein resides in the membrane. Mediates cell adhesion in a Ca(2+)-independent manner. It plays a role in axon outgrowth, guidance and fasciculation of the developing nervous system. Function in neurons is essential for adult survival, and is important for climbing behavior and activity. This Drosophila melanogaster (Fruit fly) protein is Fasciclin-3 (Fas3).